We begin with the raw amino-acid sequence, 253 residues long: MSWIPFKIGQPKKQIVPKTVERDFEREYGKLQQLEEQTRRLQKDMKKSTDADLAMSKSAVKISLDLLSNPLCEQDQDLLNMVTALDTAMKRMDAFNQEKVNQIQKTVIEPLKKFGSVFPSLNMAVKRREQALQDYRRLQAKVEKYEEKEKTGPVLAKLHQAREELRPVREDFEAKNRQLLEEMPRFYGSRLDYFQPSFESLIRAQVVYYSEMHKIFGDLSHQLDQPGHSDEQRERENEAKLSELRALSIVADD.

Residues 9-232 (GQPKKQIVPK…LDQPGHSDEQ (224 aa)) enclose the BAR domain. 3 coiled-coil regions span residues 18-51 (KTVE…STDA), 120-152 (SLNM…EKTG), and 231-247 (EQRE…LRAL). The tract at residues 220-240 (SHQLDQPGHSDEQRERENEAK) is disordered. A compositionally biased stretch (basic and acidic residues) spans 227 to 240 (GHSDEQRERENEAK).

In terms of tissue distribution, ubiquitously expressed except in brain.

The protein resides in the cytoplasm. The protein localises to the cytoskeleton. Its function is as follows. Involved in cytokinesis and septation where it has a role in the localization of F-actin. The chain is Bridging integrator 3 (BIN3) from Homo sapiens (Human).